The following is a 466-amino-acid chain: Histone acetyltransferase type B catalytic subunit DDB_G0275159 (466 aa).

The N-acetyltransferase domain occupies 169–366; that stretch reads AVFRYHEKLQ…FRIAIKKRLY (198 aa). Acetyl-CoA-binding positions include 240-242 and 247-253; these read YLI and QRMGHGK. Glu-279 (proton donor/acceptor) is an active-site residue. Residues 372–459 adopt a coiled-coil conformation; that stretch reads DSEQIEKMKQ…LEENYHKTLS (88 aa).

It belongs to the HAT1 family.

The enzyme catalyses L-lysyl-[protein] + acetyl-CoA = N(6)-acetyl-L-lysyl-[protein] + CoA + H(+). The chain is Histone acetyltransferase type B catalytic subunit DDB_G0275159 from Dictyostelium discoideum (Social amoeba).